The primary structure comprises 333 residues: NADH-quinone oxidoreductase subunit H (333 aa).

8 helical membrane passes run 8 to 28 (VLAAALIALAFVAVNAAYLVW), 75 to 95 (ILFMVAPVLAMFPALMSFVTI), 108 to 128 (IGLLVILAFASFAGLAILLAG), 154 to 174 (MLITAITVVLVSGSVDFIEIV), 191 to 211 (PGLFNIFMPISFLIFFICSLA), 251 to 271 (IVIGACLTTLLFLGGWDCPFG), 273 to 293 (FPGVWWFLIKIYILIFTFIWI), and 312 to 332 (ILIPLSLINLLLTAGFIKVFA).

It belongs to the complex I subunit 1 family. As to quaternary structure, NDH-1 is composed of 14 different subunits. Subunits NuoA, H, J, K, L, M, N constitute the membrane sector of the complex.

The protein localises to the cell inner membrane. The enzyme catalyses a quinone + NADH + 5 H(+)(in) = a quinol + NAD(+) + 4 H(+)(out). NDH-1 shuttles electrons from NADH, via FMN and iron-sulfur (Fe-S) centers, to quinones in the respiratory chain. The immediate electron acceptor for the enzyme in this species is believed to be ubiquinone. Couples the redox reaction to proton translocation (for every two electrons transferred, four hydrogen ions are translocated across the cytoplasmic membrane), and thus conserves the redox energy in a proton gradient. This subunit may bind ubiquinone. The sequence is that of NADH-quinone oxidoreductase subunit H from Desulfotalea psychrophila (strain LSv54 / DSM 12343).